The following is a 116-amino-acid chain: NADH-ubiquinone oxidoreductase chain 3 (116 aa).

Helical transmembrane passes span 4-24 (IIII…AAHF), 56-76 (FFLV…LFPF), and 88-108 (VLYI…FEWT).

The protein belongs to the complex I subunit 3 family.

The protein localises to the mitochondrion membrane. It carries out the reaction a ubiquinone + NADH + 5 H(+)(in) = a ubiquinol + NAD(+) + 4 H(+)(out). Core subunit of the mitochondrial membrane respiratory chain NADH dehydrogenase (Complex I) that is believed to belong to the minimal assembly required for catalysis. Complex I functions in the transfer of electrons from NADH to the respiratory chain. The immediate electron acceptor for the enzyme is believed to be ubiquinone. This is NADH-ubiquinone oxidoreductase chain 3 (ND3) from Pisaster ochraceus (Ochre sea star).